A 334-amino-acid polypeptide reads, in one-letter code: Protein-glutamate methylesterase/protein-glutamine glutaminase 1 (334 aa).

Residues 2-120 enclose the Response regulatory domain; it reads NIGIVNDLPL…GAAGDTTKLL (119 aa). Asp53 carries the post-translational modification 4-aspartylphosphate. Residues 145 to 334 enclose the CheB-type methylesterase domain; sequence RAGGGPLIAI…AGELAALARI (190 aa). Active-site residues include Ser157, His184, and Asp277.

The protein belongs to the CheB family. In terms of processing, phosphorylated by CheA. Phosphorylation of the N-terminal regulatory domain activates the methylesterase activity.

The protein resides in the cytoplasm. The enzyme catalyses [protein]-L-glutamate 5-O-methyl ester + H2O = L-glutamyl-[protein] + methanol + H(+). It carries out the reaction L-glutaminyl-[protein] + H2O = L-glutamyl-[protein] + NH4(+). Functionally, involved in chemotaxis. Part of a chemotaxis signal transduction system that modulates chemotaxis in response to various stimuli. Catalyzes the demethylation of specific methylglutamate residues introduced into the chemoreceptors (methyl-accepting chemotaxis proteins or MCP) by CheR. Also mediates the irreversible deamidation of specific glutamine residues to glutamic acid. The polypeptide is Protein-glutamate methylesterase/protein-glutamine glutaminase 1 (Burkholderia lata (strain ATCC 17760 / DSM 23089 / LMG 22485 / NCIMB 9086 / R18194 / 383)).